Reading from the N-terminus, the 271-residue chain is Fatty acid elongase A (271 aa).

Transmembrane regions (helical) follow at residues I35 to F55, A68 to I88, I102 to S122, S139 to L159, C165 to F185, H198 to Y220, and T237 to V257.

Belongs to the ELO family.

It localises to the membrane. The catalysed reaction is a very-long-chain acyl-CoA + malonyl-CoA + H(+) = a very-long-chain 3-oxoacyl-CoA + CO2 + CoA. Its function is as follows. Fatty acid elongase with strict substrate specificity for monounsaturated fatty acids, in particular 16:1 (delta-9) to produce the unusual 18:1 (delta-11) fatty acid. This Dictyostelium discoideum (Social amoeba) protein is Fatty acid elongase A (eloA).